The primary structure comprises 311 residues: Ribosomal RNA small subunit methyltransferase H (311 aa).

S-adenosyl-L-methionine contacts are provided by residues 39–41, D59, F81, D102, and H109; that span reads GGH.

It belongs to the methyltransferase superfamily. RsmH family.

It is found in the cytoplasm. The enzyme catalyses cytidine(1402) in 16S rRNA + S-adenosyl-L-methionine = N(4)-methylcytidine(1402) in 16S rRNA + S-adenosyl-L-homocysteine + H(+). Specifically methylates the N4 position of cytidine in position 1402 (C1402) of 16S rRNA. The polypeptide is Ribosomal RNA small subunit methyltransferase H (Porphyromonas gingivalis (strain ATCC BAA-308 / W83)).